The primary structure comprises 247 residues: (7aS)-7a-methyl-1,5-dioxo-2,3,5,6,7,7a-hexahydro-1H-indene-carboxyl-CoA hydrolase (247 aa).

It belongs to the enoyl-CoA hydratase/isomerase family.

It catalyses the reaction (7aS)-7a-methyl-1,5-dioxo-2,3,5,6,7,7a-hexahydro-1H-indene-carboxyl-CoA + H2O = (3E)-2-(2-carboxylatoethyl)-3-methyl-6-oxocyclohex-1-ene-1-carboxyl-CoA + H(+). It participates in steroid metabolism; cholesterol degradation. Involved in the final steps of cholesterol and steroid degradation. Catalyzes the hydrolytic ring D opening of (7aS)-7a-methyl-1,5-dioxo-2,3,5,6,7,7a-hexahydro-1H-indene-carboxyl-CoA (HIEC-CoA) to (3E)-2-(2-carboxylatoethyl)-3-methyl-6-oxocyclohex-1-ene-1-carboxyl-CoA (COCHEA-CoA). This is (7aS)-7a-methyl-1,5-dioxo-2,3,5,6,7,7a-hexahydro-1H-indene-carboxyl-CoA hydrolase from Mycobacterium tuberculosis (strain ATCC 25618 / H37Rv).